We begin with the raw amino-acid sequence, 347 residues long: ATPase GET3 (347 aa).

26–33 contributes to the ATP binding site; sequence KGGVGKTT. D57 is a catalytic residue. Positions 241 and 268 each coordinate ATP. Zn(2+) contacts are provided by C279 and C282.

It belongs to the arsA ATPase family. In terms of assembly, homodimer. Component of the Golgi to ER traffic (GET) complex, which is composed of GET1, GET2 and GET3. Within the complex, GET1 and GET2 form a heterotetramer which is stabilized by phosphatidylinositol binding and which binds to the GET3 homodimer. Interacts with the chloride channel protein GEF1.

Its subcellular location is the cytoplasm. It is found in the endoplasmic reticulum. The protein localises to the golgi apparatus. In terms of biological role, ATPase required for the post-translational delivery of tail-anchored (TA) proteins to the endoplasmic reticulum. Recognizes and selectively binds the transmembrane domain of TA proteins in the cytosol. This complex then targets to the endoplasmic reticulum by membrane-bound receptors GET1 and GET2, where the tail-anchored protein is released for insertion. This process is regulated by ATP binding and hydrolysis. ATP binding drives the homodimer towards the closed dimer state, facilitating recognition of newly synthesized TA membrane proteins. ATP hydrolysis is required for insertion. Subsequently, the homodimer reverts towards the open dimer state, lowering its affinity for the GET1-GET2 receptor, and returning it to the cytosol to initiate a new round of targeting. Cooperates with the HDEL receptor ERD2 to mediate the ATP-dependent retrieval of resident ER proteins that contain a C-terminal H-D-E-L retention signal from the Golgi to the ER. Involved in low-level resistance to the oxyanions arsenite and arsenate, and in heat tolerance. The polypeptide is ATPase GET3 (Meyerozyma guilliermondii (strain ATCC 6260 / CBS 566 / DSM 6381 / JCM 1539 / NBRC 10279 / NRRL Y-324) (Yeast)).